Here is a 164-residue protein sequence, read N- to C-terminus: UPF0304 protein YPDSF_1971 (164 aa).

The protein belongs to the UPF0304 family.

This Yersinia pestis (strain Pestoides F) protein is UPF0304 protein YPDSF_1971.